The following is a 573-amino-acid chain: Urease subunit alpha (573 aa).

Residues 136–573 (GGIDCHVHFI…LPMAQRYFLF (438 aa)) form the Urease domain. Ni(2+)-binding residues include histidine 141, histidine 143, and lysine 224. Lysine 224 carries the N6-carboxylysine modification. Histidine 226 provides a ligand contact to substrate. 2 residues coordinate Ni(2+): histidine 253 and histidine 279. Histidine 327 (proton donor) is an active-site residue. Aspartate 367 is a Ni(2+) binding site.

This sequence belongs to the metallo-dependent hydrolases superfamily. Urease alpha subunit family. Heterotrimer of UreA (gamma), UreB (beta) and UreC (alpha) subunits. Three heterotrimers associate to form the active enzyme. Requires Ni cation as cofactor. Post-translationally, carboxylation allows a single lysine to coordinate two nickel ions.

It localises to the cytoplasm. It catalyses the reaction urea + 2 H2O + H(+) = hydrogencarbonate + 2 NH4(+). The protein operates within nitrogen metabolism; urea degradation; CO(2) and NH(3) from urea (urease route): step 1/1. The polypeptide is Urease subunit alpha (Rhodococcus opacus (strain B4)).